The sequence spans 426 residues: Histidine--tRNA ligase (426 aa).

It belongs to the class-II aminoacyl-tRNA synthetase family. Homodimer.

The protein resides in the cytoplasm. It catalyses the reaction tRNA(His) + L-histidine + ATP = L-histidyl-tRNA(His) + AMP + diphosphate + H(+). The protein is Histidine--tRNA ligase of Streptococcus sanguinis (strain SK36).